A 681-amino-acid chain; its full sequence is DNA ligase (681 aa).

NAD(+) is bound by residues 34–38 (DEEYD), 83–84 (SL), and Glu112. The N6-AMP-lysine intermediate role is filled by Lys114. NAD(+) is bound by residues Arg135, Glu169, Lys285, and Lys309. Residues Cys403, Cys406, Cys422, and Cys427 each contribute to the Zn(2+) site. The BRCT domain occupies 584-673 (TTSNILDGLT…GVELKESWKK (90 aa)).

Belongs to the NAD-dependent DNA ligase family. LigA subfamily. Requires Mg(2+) as cofactor. The cofactor is Mn(2+).

It carries out the reaction NAD(+) + (deoxyribonucleotide)n-3'-hydroxyl + 5'-phospho-(deoxyribonucleotide)m = (deoxyribonucleotide)n+m + AMP + beta-nicotinamide D-nucleotide.. Its function is as follows. DNA ligase that catalyzes the formation of phosphodiester linkages between 5'-phosphoryl and 3'-hydroxyl groups in double-stranded DNA using NAD as a coenzyme and as the energy source for the reaction. It is essential for DNA replication and repair of damaged DNA. The sequence is that of DNA ligase from Fervidobacterium nodosum (strain ATCC 35602 / DSM 5306 / Rt17-B1).